Consider the following 433-residue polypeptide: Probable imidazolonepropionase (433 aa).

2 residues coordinate 4-imidazolone-5-propanoate: tyrosine 160 and histidine 193. Tyrosine 160 contacts N-formimidoyl-L-glutamate. Position 261 (histidine 261) interacts with Fe(3+). Residue histidine 261 participates in Zn(2+) binding. Residue glutamate 264 coordinates 4-imidazolone-5-propanoate. Aspartate 335 lines the Fe(3+) pocket. Residue aspartate 335 participates in Zn(2+) binding. Asparagine 337 lines the N-formimidoyl-L-glutamate pocket.

It belongs to the metallo-dependent hydrolases superfamily. HutI family. Zn(2+) is required as a cofactor. The cofactor is Fe(3+).

It catalyses the reaction 4-imidazolone-5-propanoate + H2O = N-formimidoyl-L-glutamate. It functions in the pathway amino-acid degradation; L-histidine degradation into L-glutamate; N-formimidoyl-L-glutamate from L-histidine: step 3/3. The polypeptide is Probable imidazolonepropionase (amdhd1) (Danio rerio (Zebrafish)).